The primary structure comprises 1258 residues: uncharacterized protein (1258 aa).

A WD 1 repeat occupies 55–93 (ELASEILGVCWQENGVLAAGISEGTWKRFLAGKQAINAE). Over residues 112 to 128 (GGRTKERKDTGTSRQEK) the composition is skewed to basic and acidic residues. Positions 112-138 (GGRTKERKDTGTSRQEKFLSSSHPHTD) are disordered. 14 WD repeats span residues 640–679 (ETLG…LLLI), 682–721 (GHSN…CIKT), 724–763 (GHEH…CLQT), 766–807 (GHTD…RTLK), 809–849 (HTGW…KTYI), 850–889 (GHTN…CIKT), 892–931 (GHTN…CLKA), 934–975 (GNTD…SSLE), 976–1017 (GHTD…QILL), 1019–1059 (HTDW…KTLS), 1060–1101 (EHSD…GILR), 1103–1143 (HSNR…KTLT), 1144–1183 (GHTN…CHHI), and 1186–1227 (GHTH…QILR).

This is an uncharacterized protein from Nostoc sp. (strain PCC 7120 / SAG 25.82 / UTEX 2576).